The chain runs to 285 residues: Ribonuclease H1 (285 aa).

The disordered stretch occupies residues 72–122 (RSSSSPDGSKGQESAHVQKLQVKTSKRPREPLGEEEEPPEPGAKHTRQDTE). Positions 135 to 281 (MGESVVVYTD…ADRLAREGAK (147 aa)) constitute an RNase H type-1 domain. The Mg(2+) site is built by Asp144, Glu185, Asp209, and Asp273.

The protein belongs to the RNase H family. As to quaternary structure, monomer. Mg(2+) is required as a cofactor.

It is found in the cytoplasm. The catalysed reaction is Endonucleolytic cleavage to 5'-phosphomonoester.. Its activity is regulated as follows. In the presence of magnesium, manganese is inhibitory. Functionally, endonuclease that specifically degrades the RNA of RNA-DNA hybrids. Plays a role in RNA polymerase II (RNAp II) transcription termination by degrading R-loop RNA-DNA hybrid formation at G-rich pause sites located downstream of the poly(A) site and behind the elongating RNAp II. This chain is Ribonuclease H1 (Rnaseh1), found in Rattus norvegicus (Rat).